Consider the following 457-residue polypeptide: Amidophosphoribosyltransferase (457 aa).

Residue Cys2 is the Nucleophile of the active site. The Glutamine amidotransferase type-2 domain maps to 2–223; the sequence is CGVVGIYHPD…PGKAAIIKDG (222 aa). Cys239 serves as a coordination point for [4Fe-4S] cluster. Mg(2+) contacts are provided by Ser286, Asp348, and Asp349. Residues Cys385, Cys438, and Cys441 each contribute to the [4Fe-4S] cluster site.

It in the C-terminal section; belongs to the purine/pyrimidine phosphoribosyltransferase family. Mg(2+) serves as cofactor. [4Fe-4S] cluster is required as a cofactor.

It carries out the reaction 5-phospho-beta-D-ribosylamine + L-glutamate + diphosphate = 5-phospho-alpha-D-ribose 1-diphosphate + L-glutamine + H2O. It participates in purine metabolism; IMP biosynthesis via de novo pathway; N(1)-(5-phospho-D-ribosyl)glycinamide from 5-phospho-alpha-D-ribose 1-diphosphate: step 1/2. Catalyzes the formation of phosphoribosylamine from phosphoribosylpyrophosphate (PRPP) and glutamine. This is Amidophosphoribosyltransferase from Archaeoglobus fulgidus (strain ATCC 49558 / DSM 4304 / JCM 9628 / NBRC 100126 / VC-16).